Reading from the N-terminus, the 132-residue chain is Ribonuclease P protein component (132 aa).

The protein belongs to the RnpA family. As to quaternary structure, consists of a catalytic RNA component (M1 or rnpB) and a protein subunit.

It catalyses the reaction Endonucleolytic cleavage of RNA, removing 5'-extranucleotides from tRNA precursor.. In terms of biological role, RNaseP catalyzes the removal of the 5'-leader sequence from pre-tRNA to produce the mature 5'-terminus. It can also cleave other RNA substrates such as 4.5S RNA. The protein component plays an auxiliary but essential role in vivo by binding to the 5'-leader sequence and broadening the substrate specificity of the ribozyme. In Micrococcus luteus (strain ATCC 4698 / DSM 20030 / JCM 1464 / CCM 169 / CCUG 5858 / IAM 1056 / NBRC 3333 / NCIMB 9278 / NCTC 2665 / VKM Ac-2230) (Micrococcus lysodeikticus), this protein is Ribonuclease P protein component.